The following is a 632-amino-acid chain: Pheromone-processing carboxypeptidase kex1 (632 aa).

Residues 1–38 (MLLTTPSSRGSRAQSGIANVSWLALSLLLLFSPTLGSA) form the signal peptide. Topologically, residues 39 to 523 (KSAADYYVRS…KETEWKAYAK (485 aa)) are lumenal. Residues Asn119 and Asn126 are each glycosylated (N-linked (GlcNAc...) asparagine). Residues Ser190 and Asp390 contribute to the active site. N-linked (GlcNAc...) asparagine glycosylation is found at Asn441 and Asn449. His452 is a catalytic residue. A disordered region spans residues 480 to 509 (KPADSRIDGEKLPQTSVGGHPNSTAAEQQA). Residues 492-506 (PQTSVGGHPNSTAAE) show a composition bias toward polar residues. N-linked (GlcNAc...) asparagine glycosylation is present at Asn501. Residues 524–544 (SGEAALIVVIIGVTVWGFFIW) form a helical membrane-spanning segment. Topologically, residues 545–632 (RSRRRNRGYQ…SSTKPGGAQP (88 aa)) are cytoplasmic. Residues 574–632 (RSGPADVEAGDFDESELDNLHSPGLEQEHYAVGDDSDEESPNHQPAAPPSSTKPGGAQP) form a disordered region. Residues 581–590 (EAGDFDESEL) show a composition bias toward acidic residues.

The protein belongs to the peptidase S10 family.

The protein resides in the golgi apparatus. It is found in the trans-Golgi network membrane. It carries out the reaction Preferential release of a C-terminal arginine or lysine residue.. In terms of biological role, protease with a carboxypeptidase B-like function involved in the C-terminal processing of the lysine and arginine residues from protein precursors. Promotes cell fusion and is involved in the programmed cell death. This Aspergillus fumigatus (strain CBS 144.89 / FGSC A1163 / CEA10) (Neosartorya fumigata) protein is Pheromone-processing carboxypeptidase kex1 (kex1).